We begin with the raw amino-acid sequence, 414 residues long: ORC1-type DNA replication protein 1 (414 aa).

ATP-binding positions include 70 to 74 (TGKTA), Tyr213, and Arg225.

The protein belongs to the CDC6/cdc18 family.

Its function is as follows. Involved in regulation of DNA replication. This Methanosarcina acetivorans (strain ATCC 35395 / DSM 2834 / JCM 12185 / C2A) protein is ORC1-type DNA replication protein 1 (cdc6-1).